The chain runs to 123 residues: Large ribosomal subunit protein uL29 (123 aa).

It belongs to the universal ribosomal protein uL29 family. Component of the large ribosomal subunit.

The protein localises to the cytoplasm. Functionally, component of the large ribosomal subunit. The ribosome is a large ribonucleoprotein complex responsible for the synthesis of proteins in the cell. This chain is Large ribosomal subunit protein uL29 (rpl35), found in Ictalurus punctatus (Channel catfish).